The sequence spans 391 residues: Methionine import ATP-binding protein MetN 2 (391 aa).

The 237-residue stretch at 44 to 280 folds into the ABC transporter domain; it reads VHVGKVFATP…PRHGATRALL (237 aa). An ATP-binding site is contributed by 77 to 84; that stretch reads GRSGAGKS.

The protein belongs to the ABC transporter superfamily. Methionine importer (TC 3.A.1.24) family. As to quaternary structure, the complex is composed of two ATP-binding proteins (MetN), two transmembrane proteins (MetI) and a solute-binding protein (MetQ).

Its subcellular location is the cell inner membrane. It carries out the reaction L-methionine(out) + ATP + H2O = L-methionine(in) + ADP + phosphate + H(+). It catalyses the reaction D-methionine(out) + ATP + H2O = D-methionine(in) + ADP + phosphate + H(+). Functionally, part of the ABC transporter complex MetNIQ involved in methionine import. Responsible for energy coupling to the transport system. The protein is Methionine import ATP-binding protein MetN 2 of Burkholderia ambifaria (strain ATCC BAA-244 / DSM 16087 / CCUG 44356 / LMG 19182 / AMMD) (Burkholderia cepacia (strain AMMD)).